The sequence spans 147 residues: Protein-export protein SecB (147 aa).

This sequence belongs to the SecB family. Homotetramer, a dimer of dimers. One homotetramer interacts with 1 SecA dimer.

The protein resides in the cytoplasm. Functionally, one of the proteins required for the normal export of preproteins out of the cell cytoplasm. It is a molecular chaperone that binds to a subset of precursor proteins, maintaining them in a translocation-competent state. It also specifically binds to its receptor SecA. This is Protein-export protein SecB from Neisseria meningitidis serogroup B (strain ATCC BAA-335 / MC58).